A 432-amino-acid chain; its full sequence is Adenylosuccinate synthetase (432 aa).

GTP is bound by residues 13 to 19 (GDEGKGK) and 41 to 43 (GHT). The active-site Proton acceptor is the Asp-14. Residues Asp-14 and Gly-41 each coordinate Mg(2+). Residues 14–17 (DEGK), 39–42 (NAGH), Thr-130, Arg-144, Gln-225, Thr-240, and Arg-304 each bind IMP. Catalysis depends on His-42, which acts as the Proton donor. 300–306 (ATTGRSR) is a binding site for substrate. GTP-binding positions include Arg-306, 332-334 (KLD), and 415-417 (STG).

This sequence belongs to the adenylosuccinate synthetase family. Homodimer. It depends on Mg(2+) as a cofactor.

It localises to the cytoplasm. The enzyme catalyses IMP + L-aspartate + GTP = N(6)-(1,2-dicarboxyethyl)-AMP + GDP + phosphate + 2 H(+). It participates in purine metabolism; AMP biosynthesis via de novo pathway; AMP from IMP: step 1/2. Its function is as follows. Plays an important role in the de novo pathway of purine nucleotide biosynthesis. Catalyzes the first committed step in the biosynthesis of AMP from IMP. This is Adenylosuccinate synthetase from Yersinia pestis bv. Antiqua (strain Antiqua).